The sequence spans 121 residues: Small ribosomal subunit protein uS13 (121 aa).

Residues 91 to 121 (HRKGLPVRGQRTRTNARTRKGKKKTVAGKKK) form a disordered region.

It belongs to the universal ribosomal protein uS13 family. As to quaternary structure, part of the 30S ribosomal subunit. Forms a loose heterodimer with protein S19. Forms two bridges to the 50S subunit in the 70S ribosome.

Its function is as follows. Located at the top of the head of the 30S subunit, it contacts several helices of the 16S rRNA. In the 70S ribosome it contacts the 23S rRNA (bridge B1a) and protein L5 of the 50S subunit (bridge B1b), connecting the 2 subunits; these bridges are implicated in subunit movement. Contacts the tRNAs in the A and P-sites. The chain is Small ribosomal subunit protein uS13 from Treponema denticola (strain ATCC 35405 / DSM 14222 / CIP 103919 / JCM 8153 / KCTC 15104).